The sequence spans 258 residues: MLVLVSPAKTLDFENPPITNTHTQPCLLKQSQTLIDVCRELTPMDIASLMKVSDKIAGLNAARFADWQPPFTLDNAKQAIFAFRGDVYTGFDADHLSESQMASSQKHLRILSGLYGLLKPLDLIQPYRLEMGTKLTNPQGRNLYAFWGETITAEVNKALKEQGDDIIVNLASNEYFKSVNVKQLEGQLITPVFKDCKKGQFKVISFYAKKARGLMARYIVDTKPTSVEQLTAFDLEGYYYNEAQSTPTAPVFLRDEQK.

The protein belongs to the UPF0246 family.

The protein is UPF0246 protein Sfri_2896 of Shewanella frigidimarina (strain NCIMB 400).